Reading from the N-terminus, the 288-residue chain is Phenazine biosynthesis-like domain-containing protein 1 (288 aa).

Glutamate 46 is an active-site residue.

The protein belongs to the PhzF family.

This Mus musculus (Mouse) protein is Phenazine biosynthesis-like domain-containing protein 1 (Pbld1).